A 308-amino-acid polypeptide reads, in one-letter code: Cytochrome b (308 aa).

Helical transmembrane passes span 1–21, 45–66, 81–101, and 146–166; these read FGSL…LLAM, WLIR…YLHI, WNIG…GYVL, and FFAL…IHLT. Residues histidine 51 and histidine 65 each coordinate heme b. Heme b contacts are provided by histidine 150 and histidine 164. Histidine 169 serves as a coordination point for a ubiquinone. 3 helical membrane-spanning segments follow: residues 194-214, 256-276, and 288-308; these read TKDA…AMFS, LGGV…PLLH, and LSQF…WIGS.

Belongs to the cytochrome b family. As to quaternary structure, the cytochrome bc1 complex contains 11 subunits: 3 respiratory subunits (MT-CYB, CYC1 and UQCRFS1), 2 core proteins (UQCRC1 and UQCRC2) and 6 low-molecular weight proteins (UQCRH/QCR6, UQCRB/QCR7, UQCRQ/QCR8, UQCR10/QCR9, UQCR11/QCR10 and a cleavage product of UQCRFS1). This cytochrome bc1 complex then forms a dimer. Requires heme b as cofactor.

It is found in the mitochondrion inner membrane. In terms of biological role, component of the ubiquinol-cytochrome c reductase complex (complex III or cytochrome b-c1 complex) that is part of the mitochondrial respiratory chain. The b-c1 complex mediates electron transfer from ubiquinol to cytochrome c. Contributes to the generation of a proton gradient across the mitochondrial membrane that is then used for ATP synthesis. This chain is Cytochrome b (MT-CYB), found in Zaratornis stresemanni (White-cheeked cotinga).